We begin with the raw amino-acid sequence, 316 residues long: Biotin synthase (316 aa).

In terms of domain architecture, Radical SAM core spans 38–266; that stretch reads YKGKKIELCA…DKDIRVCGGR (229 aa). 3 residues coordinate [4Fe-4S] cluster: C56, C60, and C63. [2Fe-2S] cluster contacts are provided by S100, C131, C191, and R261.

The protein belongs to the radical SAM superfamily. Biotin synthase family. Homodimer. [4Fe-4S] cluster is required as a cofactor. Requires [2Fe-2S] cluster as cofactor.

The catalysed reaction is (4R,5S)-dethiobiotin + (sulfur carrier)-SH + 2 reduced [2Fe-2S]-[ferredoxin] + 2 S-adenosyl-L-methionine = (sulfur carrier)-H + biotin + 2 5'-deoxyadenosine + 2 L-methionine + 2 oxidized [2Fe-2S]-[ferredoxin]. Its pathway is cofactor biosynthesis; biotin biosynthesis; biotin from 7,8-diaminononanoate: step 2/2. Its function is as follows. Catalyzes the conversion of dethiobiotin (DTB) to biotin by the insertion of a sulfur atom into dethiobiotin via a radical-based mechanism. This chain is Biotin synthase, found in Thermodesulfovibrio yellowstonii (strain ATCC 51303 / DSM 11347 / YP87).